The sequence spans 689 residues: MDQTQHPSKAAQPLRSEKTRHCDGFRIFLAALSFSYICKALGGVIMKSSITQIERRFDIPSSISGLIDGGFEIGNLLVIVFVSYFGSKLHRPKLIGTGCFIMGIGSILTALPHFFMGYYRYATENDISSLHNSTLTCLVNQTTSLTGTSPEIMEKGCEKGSNSYTWIYVLMGNMLRGIGETPIVPLGVSYIDDFAKEGNSSMYLGTLHTIAMIGPILGFIMSSVFAKLYVDVGYVDLRSVRITPQDARWVGAWWLGFIVNGLLCIICSIPFFFLPKIPKRSQKERKNSASLHVLKTDEDKNPVTNPTTQEKQAPANLTGFLWSLRSILTNEQYVIFLILTLLQISSFIGSFTYLFKFIEQQFGQTASQANFLLGVITIPTMASGMFLGGYLIKRLKLTLLGITKFVFFTTTMAYVFYLSYFLLICENKAFAGLTLTYDGMNPVDSHIDVPLSYCNSDCICDKNQWEPVCGENGVTYISPCLAGCKSFRGDKKLMNIEFYDCSCVSGSGFQKGNHSARLGECPRDKCKTKYYFYITFQVIISFFTALGSTSLMLILIRSVQPELKSLGMGFHSLVVRTLGGILAPVYYGALIDRTCMKWSVTSCGARGACRLYNSRLFGMIYVGLSIALKTPILLLYVALIYVMKRKMKRNDNKILENGRKFTDEGNPEPVNNNGYSCVPSDEKNSETPL.

Topologically, residues Met1–Arg26 are cytoplasmic. The helical transmembrane segment at Ile27–Met46 threads the bilayer. The Extracellular segment spans residues Lys47 to Gly65. Residues Leu66–Gly86 form a helical membrane-spanning segment. Residues Ser87–Pro92 lie on the Cytoplasmic side of the membrane. A helical transmembrane segment spans residues Lys93–Gly117. The Extracellular segment spans residues Tyr118 to Ser163. Asn132 and Asn140 each carry an N-linked (GlcNAc...) asparagine glycan. A helical membrane pass occupies residues Tyr164 to Asp192. The Cytoplasmic portion of the chain corresponds to Asp193 to Ala211. The chain crosses the membrane as a helical span at residues Met212–Val232. Over Gly233–Val250 the chain is Extracellular. A helical membrane pass occupies residues Gly251–Pro275. The Cytoplasmic segment spans residues Lys276–Ser326. A phosphoserine mark is found at Ser288 and Ser290. A helical transmembrane segment spans residues Ile327–Ile348. At Gly349 to Gln368 the chain is on the extracellular side. The chain crosses the membrane as a helical span at residues Ala369 to Ile392. The Cytoplasmic segment spans residues Lys393–Lys396. The helical transmembrane segment at Leu397 to Tyr420 threads the bilayer. Over Phe421–Tyr533 the chain is Extracellular. Residues Asp448–Ser505 enclose the Kazal-like domain. Cystine bridges form between Cys454-Cys484, Cys460-Cys480, and Cys469-Cys503. Asn513 is a glycosylation site (N-linked (GlcNAc...) asparagine). A helical transmembrane segment spans residues Ile534–Ile556. Residues Arg557–Ser565 are Cytoplasmic-facing. A helical membrane pass occupies residues Leu566–Ile591. The Extracellular portion of the chain corresponds to Asp592 to Ser625. A helical transmembrane segment spans residues Ile626–Met643. Over Lys644–Leu689 the chain is Cytoplasmic. Residues Gly658 to Leu689 form a disordered region. The residue at position 662 (Thr662) is a Phosphothreonine. Ser680 is modified (phosphoserine). Positions Ser680–Leu689 are enriched in basic and acidic residues.

It belongs to the organo anion transporter (TC 2.A.60) family. Liver specific.

The protein resides in the cell membrane. The catalysed reaction is estrone 3-sulfate(out) = estrone 3-sulfate(in). The enzyme catalyses taurocholate(out) = taurocholate(in). It catalyses the reaction prostaglandin E2(out) = prostaglandin E2(in). It carries out the reaction L-thyroxine(out) = L-thyroxine(in). Mediates the Na(+)-independent uptake of organic anions such as taurochlate, bromosulfophthalein and steroid conjugates (estrone 3-sulfate, 17-beta-glucuronosyl estradiol, dehydroepiandrosterone sulfate). Also transports prostaglandin E2 and L-thyroxine (T4). Shows a pH-sensitive substrate specificity which may be ascribed to the protonation state of the binding site and leads to a stimulation of substrate transport in an acidic microenvironment. Hydrogencarbonate/HCO3(-) acts as the probable counteranion that exchanges for organic anions. This Mus musculus (Mouse) protein is Solute carrier organic anion transporter family member 1B2 (Slco1b2).